The chain runs to 119 residues: Ribonuclease P protein component (119 aa).

Belongs to the RnpA family. Consists of a catalytic RNA component (M1 or rnpB) and a protein subunit.

The catalysed reaction is Endonucleolytic cleavage of RNA, removing 5'-extranucleotides from tRNA precursor.. Functionally, RNaseP catalyzes the removal of the 5'-leader sequence from pre-tRNA to produce the mature 5'-terminus. It can also cleave other RNA substrates such as 4.5S RNA. The protein component plays an auxiliary but essential role in vivo by binding to the 5'-leader sequence and broadening the substrate specificity of the ribozyme. The polypeptide is Ribonuclease P protein component (Proteus mirabilis (strain HI4320)).